A 526-amino-acid polypeptide reads, in one-letter code: Cytochrome P450 monooxygenase milC (526 aa).

Residues Ala-2–Ala-20 form a helical membrane-spanning segment. Cys-470 provides a ligand contact to heme.

Belongs to the cytochrome P450 family. Requires heme as cofactor.

Its subcellular location is the membrane. The enzyme catalyses cordypyrone A + reduced [NADPH--hemoprotein reductase] + O2 = cordypyrone B + oxidized [NADPH--hemoprotein reductase] + H2O + H(+). It participates in secondary metabolite biosynthesis. Functionally, cytochrome P450 monooxygenase; part of the gene cluster that mediates the biosynthesis of cordypyrones A and B, 2 pyrones that show modest activities against pathogenic bacteria including methicillin-resistant Staphylococcus aureus (MRSA), Mycobacterium tuberculosis and Bacillus cereus. The HR-PKS milA catalyzes the formation of cordypyrones A via condensation of one acetate with 10 malonate units. Since milA lacks an enoyl reductase domain, the 2 beta-keto processing domains DH and KR of milA collaborate with the trans-enoyl reductase milB to catalyze the different levels of reduction. The cytochrome P450 monooxygenase milC then hydroxylates the C-22 of cordypyrones A to yield cordypyrones B. This chain is Cytochrome P450 monooxygenase milC, found in Cordyceps militaris (strain CM01) (Caterpillar fungus).